The sequence spans 244 residues: Phosphoadenosine 5'-phosphosulfate reductase (244 aa).

The active-site Nucleophile; cysteine thiosulfonate intermediate is the Cys-239.

It belongs to the PAPS reductase family. CysH subfamily.

It is found in the cytoplasm. It catalyses the reaction [thioredoxin]-disulfide + sulfite + adenosine 3',5'-bisphosphate + 2 H(+) = [thioredoxin]-dithiol + 3'-phosphoadenylyl sulfate. It functions in the pathway sulfur metabolism; hydrogen sulfide biosynthesis; sulfite from sulfate: step 3/3. Functionally, catalyzes the formation of sulfite from phosphoadenosine 5'-phosphosulfate (PAPS) using thioredoxin as an electron donor. The chain is Phosphoadenosine 5'-phosphosulfate reductase from Salmonella newport (strain SL254).